Consider the following 193-residue polypeptide: Holliday junction branch migration complex subunit RuvA (193 aa).

Positions 1 to 63 (MIGKLTGTVT…ENINKLYGFE (63 aa)) are domain I. The tract at residues 64-148 (CRKSQEVARM…GIASSTNVHI (85 aa)) is domain II. Residues 149 to 150 (AS) are flexible linker. The domain III stretch occupies residues 150 to 193 (SEAVSALVKLGFQHKPSHKVVMEIMTKRPAIEIAELITLALKML).

It belongs to the RuvA family. As to quaternary structure, homotetramer. Forms an RuvA(8)-RuvB(12)-Holliday junction (HJ) complex. HJ DNA is sandwiched between 2 RuvA tetramers; dsDNA enters through RuvA and exits via RuvB. An RuvB hexamer assembles on each DNA strand where it exits the tetramer. Each RuvB hexamer is contacted by two RuvA subunits (via domain III) on 2 adjacent RuvB subunits; this complex drives branch migration. In the full resolvosome a probable DNA-RuvA(4)-RuvB(12)-RuvC(2) complex forms which resolves the HJ.

The protein resides in the cytoplasm. Functionally, the RuvA-RuvB-RuvC complex processes Holliday junction (HJ) DNA during genetic recombination and DNA repair, while the RuvA-RuvB complex plays an important role in the rescue of blocked DNA replication forks via replication fork reversal (RFR). RuvA specifically binds to HJ cruciform DNA, conferring on it an open structure. The RuvB hexamer acts as an ATP-dependent pump, pulling dsDNA into and through the RuvAB complex. HJ branch migration allows RuvC to scan DNA until it finds its consensus sequence, where it cleaves and resolves the cruciform DNA. The sequence is that of Holliday junction branch migration complex subunit RuvA from Neorickettsia sennetsu (strain ATCC VR-367 / Miyayama) (Ehrlichia sennetsu).